Here is a 1249-residue protein sequence, read N- to C-terminus: AMB antimetabolite synthetase AmbB (1249 aa).

The tract at residues 245–633 is adenylation; sequence FEAQARRTPQ…LGRLDDQVKF (389 aa). Positions 716 to 735 are disordered; that stretch reads IDRKALPRPQATGAEPQALP. In terms of domain architecture, Carrier spans 734 to 809; it reads LPSDPLEQAL…ALLELLRQAA (76 aa). Ser-768 carries the post-translational modification O-(pantetheine 4'-phosphoryl)serine. Positions 823–1150 are condensation; it reads GLSLAERRLW…CVTQALRQRG (328 aa).

This sequence belongs to the NRP synthetase family. Pantetheine 4'-phosphate is required as a cofactor.

The enzyme catalyses holo-[peptidyl-carrier protein] + L-alanine + ATP = L-alanyl-[peptidyl-carrier protein] + AMP + diphosphate. Involved in the biosynthesis of the antimetabolite L-2-amino-4-methoxy-trans-3-butenoic acid (AMB), a non-proteinogenic amino acid which is toxic for prokaryotes and eukaryotes. Adenylates L-alanine and loads it onto its peptidyl carrier domain via a thioester linkage to the phosphopanthetheine moiety. In addition, loads activated L-Ala in trans onto the second carrier domain of AmbE. Can also activate L-Ser, Gly and D-Ala, albeit to a lower extent. The condensation domain of AmbB probably condenses the activated L-Ala and the L-Glu loaded on AmbE to form a L-Glu-L-Ala dipeptide at the first carrier domain of AmbE. This is AMB antimetabolite synthetase AmbB from Pseudomonas aeruginosa (strain ATCC 15692 / DSM 22644 / CIP 104116 / JCM 14847 / LMG 12228 / 1C / PRS 101 / PAO1).